A 304-amino-acid polypeptide reads, in one-letter code: Endonuclease III-like protein 1 (304 aa).

Residues 1-22 (MTALSARMLTRSRSLGPGAGPR) constitute a mitochondrion transit peptide. Residues 1-72 (MTALSARMLT…SDSEKGEGAE (72 aa)) are disordered. The span at 23–42 (GCREEPGPLRRREAAAEARK) shows a compositional bias: basic and acidic residues. Positions 28-52 (PGPLRRREAAAEARKSHSPVKRPRK) match the Bipartite nuclear localization signal motif. Over residues 43–55 (SHSPVKRPRKAQR) the composition is skewed to basic residues. 2 positions are modified to phosphoserine: S63 and S65. Residues 191 to 215 (HYGGDIPASVAELVALPGVGPKMAH) form the HhH domain. Catalysis depends on K212, which acts as the Nucleophile; for N-glycosylase activity. C282, C289, C292, and C298 together coordinate [4Fe-4S] cluster.

This sequence belongs to the Nth/MutY family. Interacts with YBX1. Interacts with ERCC5/XPG; the interaction stimulates NTHL1 activity and NTHL1 binding to its DNA substrate. It depends on [4Fe-4S] cluster as a cofactor. In terms of processing, ubiquitinated by TRIM26; leading to proteasomal degradation. Widely expressed with highest levels in heart and lowest levels in lung and liver.

The protein localises to the nucleus. It localises to the mitochondrion. It carries out the reaction 2'-deoxyribonucleotide-(2'-deoxyribose 5'-phosphate)-2'-deoxyribonucleotide-DNA = a 3'-end 2'-deoxyribonucleotide-(2,3-dehydro-2,3-deoxyribose 5'-phosphate)-DNA + a 5'-end 5'-phospho-2'-deoxyribonucleoside-DNA + H(+). APE1 displaces NTHL1 from the N-glycosylase-generated AP site in DNA, thereby increasing the turnover of the DNA N-glycosylase activity. AP lyase activity is stimulated by YBX1. ERCC5/XPG stimulates NTHL1 activity and NTHL1 binding to its DNA substrate. Functionally, bifunctional DNA N-glycosylase with associated apurinic/apyrimidinic (AP) lyase function that catalyzes the first step in base excision repair (BER), the primary repair pathway for the repair of oxidative DNA damage. The DNA N-glycosylase activity releases the damaged DNA base from DNA by cleaving the N-glycosidic bond, leaving an AP site. The AP-lyase activity cleaves the phosphodiester bond 3' to the AP site by a beta-elimination. Primarily recognizes and repairs oxidative base damage of pyrimidines. Also has 8-oxo-7,8-dihydroguanine (8-oxoG) DNA glycosylase activity. Acts preferentially on DNA damage opposite guanine residues in DNA. Is able to process lesions in nucleosomes without requiring or inducing nucleosome disruption. This Homo sapiens (Human) protein is Endonuclease III-like protein 1.